Reading from the N-terminus, the 2514-residue chain is MDSVYVDIDADSAFLKALQQAYPMFEVEPKQVTPNDHANARAFSHLAIKLIEQEIDPDSTILDIGSAPARRMMSDRKYHCVCPMRSAEDPERLANYARKLASAAGKVTDKNISGKINDLQAVMAVPNMETSTFCLHTDATCKQRGDVAIYQDVYAVHAPTSLYHQAIKGVRVAYWIGFDTTPFMYNAMAGAYPSYSTNWADEQVLKAKNIGLCSTDLSEGRRGKLSIMRGKKLKPCDRVLFSVGSTLYPESRKLLQSWHLPSVFHLKGKLSFTCRCDTIVSCEGYVVKRVTMSPGIYGKTSGYAVTHHAGGFLMCKTTDTVDGERVSFSVCTYVPATICDQMTGILATEVTPEDAQKLLVGLNQRIVVNGRTQRNTNTMKNYLLPIVAQAFSKWAKECRKDMEDEKLLGVRERTLTCCCLWAFRKHKTHTVYKRPDTQSIQKVPAEFDSFVIPSLWSSGLSIPLRTRIKWLLSKAPKYEQLPHSGNAEEAAQAETDAVEEQEAELTREAMPPLQATQDDIQVEIDVEQLEDRAGAGIVETPRGAIKVTAQPSDLVVGEYLVLTPQAVLRSQKLSLIHALAEQVKTCTHSGRAGRYAVEAYDGRVLVPSGYAIPQEDFQSLSESATMVFNEREFVNRKLHHIAMHGPALNTDEESYELVRVEKTEHEYVYDVDQKKCCKREEATGLVLVGDLTSPPYHEFAYEGLKIRPACPYKTAVIGVFGVPGSGKSAIIKNLVTRQDLVTSGKKENCQEISNDVMRQRKLEISARTVDSLLLNGCNKPVEVLYVDEAFACHSGTLLALIAMVRPRQKVVLCGDPKQCGFFNMMQMKVNYNHNICTQVYHKSISRRCTLPVTAIVSSLHYESKMRTTNEYNQPIVVDTTGITKPEPGDLVLTCFRGWVKQLQIDYRGNEVMTAAASQGLTRKGVYAVRQKVNENPLYAPTSEHVNVLLTRTEGKLTWKTLSGDPWIKILQNPPKGDFKATIKEWEAEHASIMAGICNHQMAFDTFQNKANVCWAKCLVPILDTAGIKLSDRQWSQIVQAFKEDRAYSPEVALNEICTRIYGVDLDSGLFSKPLISVYYADNHWDNRPGGKMFGFNPEVALMLEKKYPFTKGKWNINKQICITTRKVDEFNPETNIIPANRRLPHSLVAEHHSVRGERMEWLVNKISGHHMLLVSGHNLILPTKRVTWVAPLGTRGADYTYNLELGLPATLGRYDLVVINIHTPFRIHHYQQCVDHAMKLQMLGGDSLRLLKPGGSLLIRAYGYADRTSERVISVLGRKFRSSRALKPQCITSNTEMFFLFSRFDNGRRNFTTHVMNNQLNAVYAGLATRAGCAPSYRVKRMDIAKNTEECVVNAANPRGVPGDGVCKAVYRKWPESFRNSATPVGTAKTIMCGQYPVIHAVGPNFSNYSEAEGDRELASVYREVAKEVSRLGVSSVAIPLLSTGVYSGGKDRLLQSLNHLFAAMDSTDADVVIYCRDKEWEKKITEAISLRSQVELLDDHISVDCDIVRVHPDSSLAGRKGYSTVEGALYSYLEGTRFHQTAVDMAEIYTMWPKQTEANEQVCLYALGESIESVRQKCPVDDADASFPPKTVPCLCRYAMTPERVARLRMNHTTSIIVCSSFPLPKYKIEGVQKVKCSKALLFDHNVPSRVSPRTYRPADEIIQTPQTPTEACQDAQLVQSINDEAVPVPSDLEACDATMDWPSIGTVSTRQRHDSSDSEYSGSRSNIQLVTADVHAPMYAHSLASSGGSMLSLSSEPAQNGTMILLDSEDTDSISRVSTPIAPPRRRLGRTINVTCDEREGKILPMASDRFFTAKPYTVALSVSTADMTVYPIQAPLGLIPPPTLEPITFGDFAEGEIDNLLTGALTFGDFEPGEVEELTDSEWSTCSDTDEELRLDRAGGYIFSSDTGQGHLQQKSVRQTTLPVNIVEEVHEEKCYPPKLDEIKEQLLLKRLQESASTANRSRYQSRKVENMKATIIHRLKEGCRLYLASETPRVPSYRVTYPAPIYSPSINIKLTNPETAVAVCNEFLARNYPTVASYQVTDEYDAYLDMVDGSESCLDRATFNPSKLRSYPKQHSYHAPTIRSAVPSPFQNTLQNVLAAATKRNCNVTQMRELPTMDSAVFNVECFKKYACNQEYWREFASSPIRVTTENLTMYVTKLKGPKAAALFAKTHNLLPLQEVPMDRFTMDMKRDVKVTPGTKHTEERPKVQVIQAAEPLATAYLCGIHRELVRRLNAVLLPNVHTLFDMSAEDFDAIIATHFKPGDAVLETDIASFDKSQDDSLASTAMMLLEDLGVDQPILDLIEAAFGEISSCHLPTGTRFKFGAMMKSGMFLTLFVNTLLNITIASRVLEERLTTSACAAFIGDDNIIHGVVSDALMAARCATWMNMEVKIIDAVVSEKAPYFCGGFILHDTVTGTSCRVADPLKRLFKLGKPLAAGDEQDEDRRRALADEVTRWQRTGLVTELEKAVYSRYEVQGITAVITSMATFANSKENFKKLRGPVVTLYGGPK.

Residues 28-259 form the Alphavirus-like MT domain; sequence EPKQVTPNDH…ESRKLLQSWH (232 aa). The nsP1 membrane-binding stretch occupies residues 244–263; sequence GSTLYPESRKLLQSWHLPSV. 2 S-palmitoyl cysteine; by host lipidation sites follow: Cys-417 and Cys-419. The region spanning 690–842 is the (+)RNA virus helicase ATP-binding domain; sequence DLTSPPYHEF…HNICTQVYHK (153 aa). A ribonucleoside 5'-triphosphate is bound at residue 721 to 728; it reads GVPGSGKS. Residues 843–991 form the (+)RNA virus helicase C-terminal domain; the sequence is SISRRCTLPV…IKEWEAEHAS (149 aa). Residues 1004 to 1327 form the Peptidase C9 domain; sequence DTFQNKANVC…NQLNAVYAGL (324 aa). Residues 1005–1024 are nucleolus localization signal; that stretch reads TFQNKANVCWAKCLVPILDT. The active-site For cysteine protease nsP2 activity is the Cys-1013. The Nuclear export signal motif lies at 1058-1067; it reads TRIYGVDLDS. The active-site For cysteine protease nsP2 activity is His-1083. The Nuclear localization signal motif lies at 1182 to 1186; sequence PTKRV. The 160-residue stretch at 1334–1493 folds into the Macro domain; it reads APSYRVKRMD…KITEAISLRS (160 aa). Positions 1343, 1357, 1365, 1445, 1446, and 1447 each coordinate ADP-D-ribose. 4 residues coordinate Zn(2+): Cys-1595, Cys-1597, Cys-1620, and Cys-1638. 2 consecutive short sequence motifs (FGDF; binding to host G3BP1) follow at residues 1852-1855 and 1870-1873; these read FGDF. The 116-residue stretch at 2268 to 2383 folds into the RdRp catalytic domain; that stretch reads DAVLETDIAS…HGVVSDALMA (116 aa).

In terms of assembly, interacts with non-structural protein 3. Interacts with RNA-directed RNA polymerase nsP4. Interacts with protease nsP2. interacts with itself. Interacts with mRNA-capping enzyme nsP1. Interacts with host DDX1. Interacts with host DDX3. Interacts (via C-terminus) with host G3BP1; this interaction inhibits the formation of host stress granules on viral mRNAs and the nsp3-G3BP1 complexes bind viral RNAs and probably orchestrate the assembly of viral replication complexes. Interacts (via C-terminus) with host G3BP2; this interaction inhibits the formation of host stress granules on viral mRNAs and the nsp3-G3BP2 complexes bind viral RNAs and probably orchestrate the assembly of viral replication complexes. As to quaternary structure, interacts with mRNA-capping enzyme nsP1. Interacts with protease nsP2. interacts with itself. In terms of assembly, interacts with RNA-directed RNA polymerase nsP4. Interacts with mRNA-capping enzyme nsP1. Interacts with KPNA1/karyopherin-alpha1; this interaction probably allows the active transport of protease nsP2 into the host nucleus. Mg(2+) is required as a cofactor. It depends on Mn(2+) as a cofactor. Post-translationally, specific enzymatic cleavages in vivo yield mature proteins. The processing of the polyprotein is temporally regulated. In early stages (1.7 hpi), P1234 is first cleaved in trans through its nsP2 protease activity, releasing P123 and nsP4, which associate to form the early replication complex. At the same time, P1234 is also cut at the nsP1/nsP2 site early in infection but with lower efficiency. After replication of the viral minus-strand RNAs (4 hpi), the polyproteins are cut at the nsP1/nsP2 and nsP2/nsP3 sites very efficiently, preventing accumulation of P123 and P1234 and allowing the formation of the late replication complex. NsP3/nsP4 site is not cleaved anymore and P34 is produced rather than nsP4. In terms of processing, specific enzymatic cleavages in vivo yield mature proteins. The processing of the polyprotein is temporally regulated. In early stages (1.7 hpi), P123 is cleaved at the nsP1/nsP2 site with low efficiency. After replication of the viral minus-strand RNAs (4 hpi), the polyproteins are cut at the nsP1/nsP2 and nsP2/nsP3 sites very efficiently, preventing accumulation of P123 and allowing the formation of the late replication complex. Palmitoylated by host palmitoyltransferases ZDHHC2 and ZDHHC19. Post-translationally, phosphorylated by host on serines and threonines. In terms of processing, ubiquitinated; targets the protein for rapid degradation via the ubiquitin system. Nsp4 is present in extremely low quantities due to low frequency of translation through the amber stop-codon and the degradation by the ubiquitin pathway.

It localises to the host cytoplasmic vesicle membrane. The protein resides in the host cell membrane. It is found in the host cell projection. The protein localises to the host filopodium. Its subcellular location is the host nucleus. It localises to the host cytoplasm. It catalyses the reaction GTP + S-adenosyl-L-methionine = N(7)-methyl-GTP + S-adenosyl-L-homocysteine. It carries out the reaction N(7)-methyl-GTP + L-histidyl-[protein] = N(tele)-(N(7)-methylguanosine 5'-phospho)-L-histidyl-[protein] + diphosphate. The catalysed reaction is N(tele)-(N(7)-methylguanosine 5'-phospho)-L-histidyl-[protein] + a 5'-end diphospho-(purine-ribonucleoside) in mRNA + H(+) = a 5'-end (N(7)-methyl 5'-triphosphoguanosine)-(purine-ribonucleoside) in mRNA + L-histidyl-[protein]. The enzyme catalyses a 5'-end triphospho-ribonucleoside in mRNA + H2O = a 5'-end diphospho-ribonucleoside in mRNA + phosphate + H(+). It catalyses the reaction a ribonucleoside 5'-triphosphate + H2O = a ribonucleoside 5'-diphosphate + phosphate + H(+). It carries out the reaction ATP + H2O = ADP + phosphate + H(+). The catalysed reaction is RNA(n) + a ribonucleoside 5'-triphosphate = RNA(n+1) + diphosphate. The enzyme catalyses 4-O-(ADP-D-ribosyl)-L-aspartyl-[protein] + H2O = L-aspartyl-[protein] + ADP-D-ribose + H(+). It catalyses the reaction 5-O-(ADP-D-ribosyl)-L-glutamyl-[protein] + H2O = L-glutamyl-[protein] + ADP-D-ribose + H(+). It carries out the reaction RNA(n) + ATP = RNA(n)-3'-adenine ribonucleotide + diphosphate. The catalysed reaction is ADP-alpha-D-ribose 1''-phosphate + H2O = ADP-D-ribose + phosphate. Functionally, inactive precursor of the viral replicase, which is activated by cleavages carried out by the viral protease nsP2. In terms of biological role, the early replication complex formed by the polyprotein P123 and nsP4 synthesizes minus-strand RNAs. As soon P123 is cleaved into mature proteins, the plus-strand RNAs synthesis begins. Cytoplasmic capping enzyme that catalyzes two virus-specific reactions: methyltransferase and nsP1 guanylyltransferase. mRNA-capping is necessary since all viral RNAs are synthesized in the cytoplasm, and host capping enzymes are restricted to the nucleus. The enzymatic reaction involves a covalent link between 7-methyl-GMP and nsP1, whereas eukaryotic capping enzymes form a covalent complex only with GMP. nsP1 capping consists in the following reactions: GTP is first methylated into 7-methyl-GMP and then is covalently linked to nsP1 to form the m7GMp-nsP1 complex from which 7-methyl-GMP complex is transferred to the mRNA to create the cap structure. NsP1 is also needed for the initiation of the minus-strand RNAs synthesis. Probably serves as a membrane anchor for the replication complex composed of nsP1-nsP4. Palmitoylated nsP1 is remodeling host cell cytoskeleton, and induces filopodium-like structure formation at the surface of the host cell. Its function is as follows. Multifunctional protein whose N-terminus is part of the RNA polymerase complex and displays NTPase, RNA triphosphatase and helicase activities. NTPase and RNA triphosphatase are involved in viral RNA capping and helicase keeps a check on the dsRNA replication intermediates. The C-terminus harbors a protease that specifically cleaves the polyproteins and releases the mature proteins. Required for the shutoff of minus-strand RNAs synthesis. Specifically inhibits the host IFN response by promoting the nuclear export of host STAT1. Also inhibits host transcription by inducing the rapid proteasome-dependent degradation of POLR2A, a catalytic subunit of the RNAPII complex. The resulting inhibition of cellular protein synthesis serves to ensure maximal viral gene expression and to evade host immune response. Functionally, seems to be essential for minus-strand RNAs and subgenomic 26S mRNAs synthesis. Displays mono-ADP-ribosylhydrolase activity. ADP-ribosylation is a post-translational modification that controls various processes of the host cell and the virus probably needs to revert it for optimal viral replication. Binds proteins of G3BP family and sequesters them into the viral RNA replication complexes thereby inhibiting the formation of host stress granules on viral mRNAs. The nsp3-G3BP complexes bind viral RNAs and probably orchestrate the assembly of viral replication complexes, thanks to the ability of G3BP family members to self-assemble and bind DNA. In terms of biological role, RNA dependent RNA polymerase. Replicates genomic and antigenomic RNA by recognizing replications specific signals. The early replication complex formed by the polyprotein P123 and nsP4 synthesizes minus-strand RNAs. The late replication complex composed of fully processed nsP1-nsP4 is responsible for the production of genomic and subgenomic plus-strand RNAs. The protein is Polyprotein P1234 of O'nyong-nyong virus (strain Gulu) (ONNV).